We begin with the raw amino-acid sequence, 146 residues long: Hemoglobin subunit beta-2 (146 aa).

The region spanning 2–146 (HWSAEEKQLI…VAHALARRYH (145 aa)) is the Globin domain. Residues His63 and His92 each contribute to the heme b site.

The protein belongs to the globin family. As to quaternary structure, heterotetramer of two alpha chains and two beta chains. Red blood cells.

Involved in oxygen transport from the lung to the various peripheral tissues. This chain is Hemoglobin subunit beta-2 (HBB2), found in Naja naja (Indian cobra).